Here is a 111-residue protein sequence, read N- to C-terminus: Large ribosomal subunit protein uL24 (111 aa).

Belongs to the universal ribosomal protein uL24 family. In terms of assembly, part of the 50S ribosomal subunit.

Functionally, one of two assembly initiator proteins, it binds directly to the 5'-end of the 23S rRNA, where it nucleates assembly of the 50S subunit. One of the proteins that surrounds the polypeptide exit tunnel on the outside of the subunit. The protein is Large ribosomal subunit protein uL24 of Chlamydia muridarum (strain MoPn / Nigg).